The following is a 237-amino-acid chain: Phosphoribosylaminoimidazole-succinocarboxamide synthase (237 aa).

This sequence belongs to the SAICAR synthetase family.

It carries out the reaction 5-amino-1-(5-phospho-D-ribosyl)imidazole-4-carboxylate + L-aspartate + ATP = (2S)-2-[5-amino-1-(5-phospho-beta-D-ribosyl)imidazole-4-carboxamido]succinate + ADP + phosphate + 2 H(+). The protein operates within purine metabolism; IMP biosynthesis via de novo pathway; 5-amino-1-(5-phospho-D-ribosyl)imidazole-4-carboxamide from 5-amino-1-(5-phospho-D-ribosyl)imidazole-4-carboxylate: step 1/2. This Enterococcus faecalis (strain ATCC 700802 / V583) protein is Phosphoribosylaminoimidazole-succinocarboxamide synthase.